Reading from the N-terminus, the 216-residue chain is Ribosome maturation factor RimP (216 aa).

This sequence belongs to the RimP family.

It localises to the cytoplasm. Functionally, required for maturation of 30S ribosomal subunits. This is Ribosome maturation factor RimP from Bartonella henselae (strain ATCC 49882 / DSM 28221 / CCUG 30454 / Houston 1) (Rochalimaea henselae).